We begin with the raw amino-acid sequence, 1644 residues long: Kinesin-like protein unc-104 (1644 aa).

Residues 3-351 (SVKVAVRVRP…LRYADRAKQI (349 aa)) form the Kinesin motor domain. 97 to 104 (GQTGAGKS) contributes to the ATP binding site. Residues 358–436 (NEDANAKLIR…IAELNETWEE (79 aa)) adopt a coiled-coil conformation. The FHA domain occupies 499–565 (TRLGTSEANV…LQTGSRVILG (67 aa)). Positions 574-591 (HPEQAREKREKPKDKDVG) are enriched in basic and acidic residues. The tract at residues 574-598 (HPEQAREKREKPKDKDVGENPGGNA) is disordered. A coiled-coil region spans residues 631–672 (EQFKREKLAADQEFEEQRKTYEARIDALQKQVEEQSMTMSMY). Disordered stretches follow at residues 953 to 985 (EQEDADSGRGDSSVASELHESNEHEPGEHLQPG) and 1419 to 1440 (HMVIPPSPQTPVKDQQTPTLPE). Residues 969–984 (ELHESNEHEPGEHLQP) are compositionally biased toward basic and acidic residues. Residues 1428–1437 (TPVKDQQTPT) are compositionally biased toward polar residues. The PH domain maps to 1542–1640 (VVARKGYLNV…WLYAINPLLA (99 aa)).

This sequence belongs to the TRAFAC class myosin-kinesin ATPase superfamily. Kinesin family. Unc-104 subfamily. In terms of assembly, monomer.

The protein localises to the cytoplasm. The protein resides in the cytoskeleton. Required for presynaptic maturation, has a role in axonal transport of dense-core vesicles carrying synaptic vesicle precursors, components required for the morphological transformation of axonal growth cones to mature boutons. This chain is Kinesin-like protein unc-104, found in Aedes aegypti (Yellowfever mosquito).